The following is a 558-amino-acid chain: Protein S10 (558 aa).

The tract at residues 539–558 (SSNTSSHEHTQKIVLNKVTR) is disordered.

In Avena sativa (Oat), this protein is Protein S10 (S10).